Here is a 541-residue protein sequence, read N- to C-terminus: Membrane protein insertase YidC (541 aa).

5 consecutive transmembrane segments (helical) span residues 7-27, 346-368, 416-436, 454-474, and 495-515; these read LLVI…QLDY, IVQN…LYPL, LGGC…YWTF, LSAQ…MFLL, and PLIF…YWLV.

Belongs to the OXA1/ALB3/YidC family. Type 1 subfamily. In terms of assembly, interacts with the Sec translocase complex via SecD. Specifically interacts with transmembrane segments of nascent integral membrane proteins during membrane integration.

Its subcellular location is the cell inner membrane. Its function is as follows. Required for the insertion and/or proper folding and/or complex formation of integral membrane proteins into the membrane. Involved in integration of membrane proteins that insert both dependently and independently of the Sec translocase complex, as well as at least some lipoproteins. Aids folding of multispanning membrane proteins. The sequence is that of Membrane protein insertase YidC from Pasteurella multocida (strain Pm70).